A 278-amino-acid chain; its full sequence is Ribosomal RNA small subunit methyltransferase A (278 aa).

S-adenosyl-L-methionine contacts are provided by N27, L29, G54, E75, D95, and N118.

Belongs to the class I-like SAM-binding methyltransferase superfamily. rRNA adenine N(6)-methyltransferase family. RsmA subfamily.

It is found in the cytoplasm. The catalysed reaction is adenosine(1518)/adenosine(1519) in 16S rRNA + 4 S-adenosyl-L-methionine = N(6)-dimethyladenosine(1518)/N(6)-dimethyladenosine(1519) in 16S rRNA + 4 S-adenosyl-L-homocysteine + 4 H(+). Its function is as follows. Specifically dimethylates two adjacent adenosines (A1518 and A1519) in the loop of a conserved hairpin near the 3'-end of 16S rRNA in the 30S particle. May play a critical role in biogenesis of 30S subunits. The chain is Ribosomal RNA small subunit methyltransferase A from Chlamydia caviae (strain ATCC VR-813 / DSM 19441 / 03DC25 / GPIC) (Chlamydophila caviae).